Here is a 495-residue protein sequence, read N- to C-terminus: Cytochrome P450 monooxygenase 88 (495 aa).

A helical membrane pass occupies residues 2–22 (FLQIVTSVLATGLLYALISVL). Asn25 and Asn198 each carry an N-linked (GlcNAc...) asparagine glycan. Cys428 contacts heme.

Belongs to the cytochrome P450 family. Requires heme as cofactor.

Its subcellular location is the membrane. Its pathway is secondary metabolite biosynthesis. In terms of biological role, cytochrome P450 monooxygenase that is able to use 4-ethoxybenzoic acid as a substrate for oxidation. This Postia placenta (strain ATCC 44394 / Madison 698-R) (Brown rot fungus) protein is Cytochrome P450 monooxygenase 88.